Reading from the N-terminus, the 408-residue chain is Sporulation integral membrane protein YlbJ (408 aa).

The next 8 membrane-spanning stretches (helical) occupy residues 6-26 (INTL…ISHP), 43-63 (VVFP…GFGI), 81-101 (VPGV…PAGA), 131-151 (LFIF…GILL), 214-234 (VTSS…FSVF), 294-314 (IIVS…VAGI), 324-344 (PFFI…MLLW), and 377-397 (LLVQ…IIIF).

Its subcellular location is the cell membrane. Required for spore cortex formation. This chain is Sporulation integral membrane protein YlbJ (ylbJ), found in Bacillus subtilis (strain 168).